Here is a 294-residue protein sequence, read N- to C-terminus: N-acetylmuramic acid 6-phosphate etherase (294 aa).

The SIS domain maps to 54–217 (VIQSFEEEGR…STASMIGVGK (164 aa)). Residue Glu-82 is the Proton donor of the active site. Residue Glu-113 is part of the active site.

This sequence belongs to the GCKR-like family. MurNAc-6-P etherase subfamily. As to quaternary structure, homodimer.

It catalyses the reaction N-acetyl-D-muramate 6-phosphate + H2O = N-acetyl-D-glucosamine 6-phosphate + (R)-lactate. Its pathway is amino-sugar metabolism; N-acetylmuramate degradation. Functionally, specifically catalyzes the cleavage of the D-lactyl ether substituent of MurNAc 6-phosphate, producing GlcNAc 6-phosphate and D-lactate. This Bacillus cereus (strain ZK / E33L) protein is N-acetylmuramic acid 6-phosphate etherase.